The following is a 921-amino-acid chain: GPI ethanolamine phosphate transferase 1 (921 aa).

Topologically, residues M1–L9 are cytoplasmic. Residues I10–I30 traverse the membrane as a helical segment. The Lumenal portion of the chain corresponds to S31–T457. Residues N90, N138, N198, N262, and N286 are each glycosylated (N-linked (GlcNAc...) asparagine). A helical transmembrane segment spans residues I458–F478. At I479–P488 the chain is on the cytoplasmic side. A helical transmembrane segment spans residues S489–Y509. At Q510–F516 the chain is on the lumenal side. Residues Y517 to I537 traverse the membrane as a helical segment. At R538 to E552 the chain is on the cytoplasmic side. The chain crosses the membrane as a helical span at residues S553–H573. The Lumenal segment spans residues R574 to W575. Residues I576–L596 form a helical membrane-spanning segment. The Cytoplasmic segment spans residues F597–N599. A helical transmembrane segment spans residues L600–I620. E621 is a topological domain (lumenal). The helical transmembrane segment at N622–M642 threads the bilayer. Topologically, residues R643–H654 are cytoplasmic. A helical transmembrane segment spans residues L655–I675. Residues S676–P684 are Lumenal-facing. A helical transmembrane segment spans residues A685–L705. The Cytoplasmic portion of the chain corresponds to H706–S728. Residues F729–V749 traverse the membrane as a helical segment. At Q750–V777 the chain is on the lumenal side. A helical membrane pass occupies residues A778 to I798. The Cytoplasmic segment spans residues S799–G819. Residues A820 to M840 form a helical membrane-spanning segment. Topologically, residues N841–Y849 are lumenal. Residues T850–L870 form a helical membrane-spanning segment. Topologically, residues K871–D878 are cytoplasmic. The helical transmembrane segment at I879 to L899 threads the bilayer. The Lumenal segment spans residues E900–N921. N-linked (GlcNAc...) asparagine glycosylation is present at N909.

It belongs to the PIGG/PIGN/PIGO family. PIGN subfamily.

The protein resides in the endoplasmic reticulum membrane. It functions in the pathway glycolipid biosynthesis; glycosylphosphatidylinositol-anchor biosynthesis. Ethanolamine phosphate transferase involved in glycosylphosphatidylinositol-anchor biosynthesis. Transfers ethanolamine phosphate to the first alpha-1,4-linked mannose of the glycosylphosphatidylinositol precursor of GPI-anchor. The protein is GPI ethanolamine phosphate transferase 1 (MCD4) of Candida glabrata (strain ATCC 2001 / BCRC 20586 / JCM 3761 / NBRC 0622 / NRRL Y-65 / CBS 138) (Yeast).